A 213-amino-acid polypeptide reads, in one-letter code: N-(5'-phosphoribosyl)anthranilate isomerase (213 aa).

It belongs to the TrpF family.

It carries out the reaction N-(5-phospho-beta-D-ribosyl)anthranilate = 1-(2-carboxyphenylamino)-1-deoxy-D-ribulose 5-phosphate. It participates in amino-acid biosynthesis; L-tryptophan biosynthesis; L-tryptophan from chorismate: step 3/5. This chain is N-(5'-phosphoribosyl)anthranilate isomerase, found in Rhodopseudomonas palustris (strain ATCC BAA-98 / CGA009).